Consider the following 212-residue polypeptide: Imidazole glycerol phosphate synthase subunit HisH (212 aa).

Residues 3–212 (TVAVIDYGMG…QNFAAWDGRW (210 aa)) enclose the Glutamine amidotransferase type-1 domain. Residue Cys-81 is the Nucleophile of the active site. Residues His-190 and Glu-192 contribute to the active site.

Heterodimer of HisH and HisF.

The protein localises to the cytoplasm. The catalysed reaction is 5-[(5-phospho-1-deoxy-D-ribulos-1-ylimino)methylamino]-1-(5-phospho-beta-D-ribosyl)imidazole-4-carboxamide + L-glutamine = D-erythro-1-(imidazol-4-yl)glycerol 3-phosphate + 5-amino-1-(5-phospho-beta-D-ribosyl)imidazole-4-carboxamide + L-glutamate + H(+). It carries out the reaction L-glutamine + H2O = L-glutamate + NH4(+). Its pathway is amino-acid biosynthesis; L-histidine biosynthesis; L-histidine from 5-phospho-alpha-D-ribose 1-diphosphate: step 5/9. Its function is as follows. IGPS catalyzes the conversion of PRFAR and glutamine to IGP, AICAR and glutamate. The HisH subunit catalyzes the hydrolysis of glutamine to glutamate and ammonia as part of the synthesis of IGP and AICAR. The resulting ammonia molecule is channeled to the active site of HisF. The sequence is that of Imidazole glycerol phosphate synthase subunit HisH from Pseudomonas savastanoi pv. phaseolicola (strain 1448A / Race 6) (Pseudomonas syringae pv. phaseolicola (strain 1448A / Race 6)).